Reading from the N-terminus, the 164-residue chain is Putative ankyrin repeat protein RBE_0585 (164 aa).

2 ANK repeats span residues 42–107 (NQDT…VAIL) and 126–149 (DKDT…MLDY).

The polypeptide is Putative ankyrin repeat protein RBE_0585 (Rickettsia bellii (strain RML369-C)).